We begin with the raw amino-acid sequence, 146 residues long: Hemoglobin subunit beta (146 aa).

Valine 1 is subject to N-acetylvaline. In terms of domain architecture, Globin spans 2-146 (HLSDGEKNAI…VANALAHKYH (145 aa)). Serine 44 is modified (phosphoserine). Lysine 59 is subject to N6-acetyllysine. Histidine 63 is a binding site for heme b. Lysine 82 is subject to N6-acetyllysine. A heme b-binding site is contributed by histidine 92. An S-nitrosocysteine modification is found at cysteine 93. Lysine 144 is modified (N6-acetyllysine).

This sequence belongs to the globin family. In terms of assembly, heterotetramer of two alpha chains and two beta chains. Red blood cells.

In terms of biological role, involved in oxygen transport from the lung to the various peripheral tissues. This Spermophilus citellus (European ground squirrel) protein is Hemoglobin subunit beta (HBB).